Reading from the N-terminus, the 877-residue chain is Kinetochore null protein 2 (877 aa).

One can recognise an SANTA domain in the interval 20–107; sequence IRLNLWSMKF…SNGIPENWAD (88 aa). 3 disordered regions span residues 122 to 315, 338 to 535, and 549 to 604; these read RPIQ…SKSV, FEST…ESLN, and MMFG…NDSI. The stretch at 153–211 forms a coiled coil; the sequence is QKNSENEKERNRREREEQQTKERERRLEEEKQRRDAEAEAERRRKEEEELEEANYTLRA. The span at 156–199 shows a compositional bias: basic and acidic residues; it reads SENEKERNRREREEQQTKERERRLEEEKQRRDAEAEAERRRKEE. Residues 251 to 279 show a composition bias toward polar residues; that stretch reads IASSTPQQKQRLADGANNQIPPTQKSQDS. Basic and acidic residues-rich tracts occupy residues 359–385, 394–444, and 453–480; these read EPRH…DNSR, RRHE…RGRD, and VRFE…DYGR. Residues 491-549 are a coiled coil; that stretch reads EDEEKLNAIVRREKELRNRLQKSQKASSSSYRHRSNSSDAEESLNEWDIENQELLDNSM. The span at 511-520 shows a compositional bias: low complexity; the sequence is QKSQKASSSS. Residues 573-583 show a composition bias toward polar residues; it reads RSKPANSTKSP. The segment covering 592 to 601 has biased composition (basic and acidic residues); the sequence is ASLEDNRDLN. The region spanning 617 to 678 is the Myb-like domain; the sequence is VAKKITWRKQ…AITRLKWVEP (62 aa). Disordered stretches follow at residues 757-785 and 808-877; these read RGGT…FNSP and MQAR…TSIY. 2 stretches are compositionally biased toward polar residues: residues 775 to 785 and 819 to 836; these read SRGNNSTFNSP and SSSM…TSIS. Residues 856–871 show a composition bias toward acidic residues; sequence EDDENEDNDDDDDMRE.

It belongs to the KNL2 family. Interacts with hcp-3.

It localises to the nucleus. The protein localises to the chromosome. It is found in the centromere. Its subcellular location is the kinetochore. In terms of biological role, required for the recruitment of hcp-3, hcp-4, knl-1, bub-1 and lin-53 to kinetochores, kinetochore assembly, chromosome condensation and chromosome segregation in meiosis and mitosis. This Caenorhabditis elegans protein is Kinetochore null protein 2.